Consider the following 314-residue polypeptide: Aspartate carbamoyltransferase catalytic subunit (314 aa).

Arginine 58 and threonine 59 together coordinate carbamoyl phosphate. Lysine 86 is an L-aspartate binding site. Carbamoyl phosphate contacts are provided by arginine 108, histidine 136, and glutamine 139. L-aspartate-binding residues include arginine 169 and arginine 223. Residues glycine 264 and proline 265 each coordinate carbamoyl phosphate.

It belongs to the aspartate/ornithine carbamoyltransferase superfamily. ATCase family. As to quaternary structure, heterododecamer (2C3:3R2) of six catalytic PyrB chains organized as two trimers (C3), and six regulatory PyrI chains organized as three dimers (R2).

The catalysed reaction is carbamoyl phosphate + L-aspartate = N-carbamoyl-L-aspartate + phosphate + H(+). The protein operates within pyrimidine metabolism; UMP biosynthesis via de novo pathway; (S)-dihydroorotate from bicarbonate: step 2/3. Its function is as follows. Catalyzes the condensation of carbamoyl phosphate and aspartate to form carbamoyl aspartate and inorganic phosphate, the committed step in the de novo pyrimidine nucleotide biosynthesis pathway. The chain is Aspartate carbamoyltransferase catalytic subunit from Opitutus terrae (strain DSM 11246 / JCM 15787 / PB90-1).